A 506-amino-acid polypeptide reads, in one-letter code: NADH-quinone oxidoreductase subunit N (506 aa).

The next 14 membrane-spanning stretches (helical) occupy residues 14-34, 40-60, 72-92, 109-129, 131-151, 166-186, 209-229, 256-276, 286-306, 314-334, 343-363, 385-405, 420-440, and 465-485; these read MVPE…DLFF, YVAL…ITLY, FVLD…AALI, GEYY…ASSV, FVTL…LVGI, VING…LYGI, LLLA…IATV, MAGF…VSVQ, MSIY…VVAL, LFAY…VALS, FYML…HGLI, AIVM…AGFI, AHYV…VYYF, and IVMS…MIGY.

This sequence belongs to the complex I subunit 2 family. As to quaternary structure, NDH-1 is composed of 14 different subunits. Subunits NuoA, H, J, K, L, M, N constitute the membrane sector of the complex.

It is found in the cell membrane. It catalyses the reaction a quinone + NADH + 5 H(+)(in) = a quinol + NAD(+) + 4 H(+)(out). NDH-1 shuttles electrons from NADH, via FMN and iron-sulfur (Fe-S) centers, to quinones in the respiratory chain. The immediate electron acceptor for the enzyme in this species is believed to be a menaquinone. Couples the redox reaction to proton translocation (for every two electrons transferred, four hydrogen ions are translocated across the cytoplasmic membrane), and thus conserves the redox energy in a proton gradient. This Bacillus anthracis protein is NADH-quinone oxidoreductase subunit N.